We begin with the raw amino-acid sequence, 849 residues long: MFSKNKHNTKFIVIACVIVVLILILFCLDFQNIQEIIETINQLTNNQNPSQNTASEMSGMRRKIIFFIFNFFGKIILASFVISFLLHIKKNAQIKRLKNKLSLWSKLSFHVSQIGEEVLNELPIGIVLIDISSQEIQWLNPYASFILKNPEINSPLAQINENMAQLISTSDAIPKTIITLENKKFECFYKKDLNVFYLFDATEKEQIKHLFLQKTLALAMITFDNLAESLIRYDLSEQSQIQGEYLSALSDYIEPYEGYLKQLIDDRFLLLLNRQNLDKMLENKFIILDTIRNISYKYQLKVTLSMGIACWNLSYEKLATYSQNAIELAQKRGGDQVVVNIENEKIKYFGAKIASLSKQSKVHARINAQNLVDILKKHPHCFIMGHTHTDLDALGSVIAFYKIATTIHPESNNYIILDEEKLDKSLIPVYNQLIKTEAKTSLNIITTQQASKMIKDNSLIAVLDTQTKDMVNSPELLSLTSNVVVVDHHRATEEIIPSIFSYVESSASSTVELLVEVMGFLEKEVHITAFEASIMYAGILIDTNAFIYRTSSRTFEVASKLKDLGADAIEVKSWLRKDFDKVLEINKLISEMEIFMDRFAIIQSSEIYENRSFLAQVAEGVLNIRNVDAAFMIAQIADNKIAISARSYNEINVQTIMEQMEGGGHLNSAATQLEGTNIKTVTDTLKHFLKLEYEKGEKNMEIILLTDIPNKGKKHEIIKVNNGYGNFLIQNKKALLADKTNLAAIKQSQMLEQEQKRNHELLMHKLKQEIDDKKITLDIQLGPKGKIYGKITLKQIAEEFLKVHNITLDRKKISLEGEIIAIGIYPVDVFLTDQIKATFFLNVTERKSK.

The segment at 1 to 680 (MFSKNKHNTK…TQLEGTNIKT (680 aa)) is unknown. Transmembrane regions (helical) follow at residues 11-31 (FIVIACVIVVLILILFCLDFQ) and 64-84 (IIFFIFNFFGKIILASFVISF). Residues 214 to 342 (KTLALAMITF…GGDQVVVNIE (129 aa)) enclose the GGDEF domain. The interval 681–849 (VTDTLKHFLK…FLNVTERKSK (169 aa)) is large ribosomal subunit protein bL9.

The protein belongs to the bacterial ribosomal protein bL9 family.

It is found in the cell membrane. In terms of biological role, binds to the 23S rRNA. The sequence is that of Membrane protein-large ribosomal subunit bL9 fusion protein from Onion yellows phytoplasma (strain OY-M).